Reading from the N-terminus, the 250-residue chain is uncharacterized protein (250 aa).

This is an uncharacterized protein from Rickettsia prowazekii (strain Madrid E).